Consider the following 147-residue polypeptide: Small ribosomal subunit protein uS12 (147 aa).

The interval 1-22 is disordered; that stretch reads MPTINQLVRKPRKSKIEKSDSP. D102 carries the 3-methylthioaspartic acid modification.

Belongs to the universal ribosomal protein uS12 family. Part of the 30S ribosomal subunit. Contacts proteins S8 and S17. May interact with IF1 in the 30S initiation complex.

With S4 and S5 plays an important role in translational accuracy. In terms of biological role, interacts with and stabilizes bases of the 16S rRNA that are involved in tRNA selection in the A site and with the mRNA backbone. Located at the interface of the 30S and 50S subunits, it traverses the body of the 30S subunit contacting proteins on the other side and probably holding the rRNA structure together. The combined cluster of proteins S8, S12 and S17 appears to hold together the shoulder and platform of the 30S subunit. This is Small ribosomal subunit protein uS12 from Streptococcus pyogenes serotype M12 (strain MGAS2096).